The following is a 1295-amino-acid chain: Phosphoribosylformylglycinamidine synthase (1295 aa).

The tract at residues 305 to 327 is disordered; it reads WPGAATGSGGEIRDEGATGRGAK. ATP contacts are provided by residues 307-318 and alanine 678; that span reads GAATGSGGEIRD. Positions 718, 722, and 884 each coordinate Mg(2+). Serine 886 lines the ATP pocket. A Glutamine amidotransferase type-1 domain is found at 1042 to 1295; sequence VAVLREQGVN…IFRNARKQLG (254 aa). The active-site Nucleophile is the cysteine 1135. Active-site residues include histidine 1260 and glutamate 1262.

The protein in the N-terminal section; belongs to the FGAMS family. Monomer.

It localises to the cytoplasm. It carries out the reaction N(2)-formyl-N(1)-(5-phospho-beta-D-ribosyl)glycinamide + L-glutamine + ATP + H2O = 2-formamido-N(1)-(5-O-phospho-beta-D-ribosyl)acetamidine + L-glutamate + ADP + phosphate + H(+). It functions in the pathway purine metabolism; IMP biosynthesis via de novo pathway; 5-amino-1-(5-phospho-D-ribosyl)imidazole from N(2)-formyl-N(1)-(5-phospho-D-ribosyl)glycinamide: step 1/2. In terms of biological role, phosphoribosylformylglycinamidine synthase involved in the purines biosynthetic pathway. Catalyzes the ATP-dependent conversion of formylglycinamide ribonucleotide (FGAR) and glutamine to yield formylglycinamidine ribonucleotide (FGAM) and glutamate. This Escherichia coli (strain UTI89 / UPEC) protein is Phosphoribosylformylglycinamidine synthase.